The following is a 339-amino-acid chain: Phosphoribosylformylglycinamidine cyclo-ligase (339 aa).

Belongs to the AIR synthase family.

It localises to the cytoplasm. It carries out the reaction 2-formamido-N(1)-(5-O-phospho-beta-D-ribosyl)acetamidine + ATP = 5-amino-1-(5-phospho-beta-D-ribosyl)imidazole + ADP + phosphate + H(+). It participates in purine metabolism; IMP biosynthesis via de novo pathway; 5-amino-1-(5-phospho-D-ribosyl)imidazole from N(2)-formyl-N(1)-(5-phospho-D-ribosyl)glycinamide: step 2/2. In Oceanobacillus iheyensis (strain DSM 14371 / CIP 107618 / JCM 11309 / KCTC 3954 / HTE831), this protein is Phosphoribosylformylglycinamidine cyclo-ligase.